Consider the following 123-residue polypeptide: UPF0102 protein Fjoh_1217 (123 aa).

Belongs to the UPF0102 family.

This chain is UPF0102 protein Fjoh_1217, found in Flavobacterium johnsoniae (strain ATCC 17061 / DSM 2064 / JCM 8514 / BCRC 14874 / CCUG 350202 / NBRC 14942 / NCIMB 11054 / UW101) (Cytophaga johnsonae).